A 243-amino-acid polypeptide reads, in one-letter code: 1-(5-phosphoribosyl)-5-[(5-phosphoribosylamino)methylideneamino] imidazole-4-carboxamide isomerase (243 aa).

D8 serves as the catalytic Proton acceptor. D130 (proton donor) is an active-site residue.

This sequence belongs to the HisA/HisF family.

It localises to the cytoplasm. It carries out the reaction 1-(5-phospho-beta-D-ribosyl)-5-[(5-phospho-beta-D-ribosylamino)methylideneamino]imidazole-4-carboxamide = 5-[(5-phospho-1-deoxy-D-ribulos-1-ylimino)methylamino]-1-(5-phospho-beta-D-ribosyl)imidazole-4-carboxamide. The protein operates within amino-acid biosynthesis; L-histidine biosynthesis; L-histidine from 5-phospho-alpha-D-ribose 1-diphosphate: step 4/9. This Acinetobacter baylyi (strain ATCC 33305 / BD413 / ADP1) protein is 1-(5-phosphoribosyl)-5-[(5-phosphoribosylamino)methylideneamino] imidazole-4-carboxamide isomerase.